The primary structure comprises 166 residues: Crossover junction endodeoxyribonuclease RuvC (166 aa).

Active-site residues include Asp-12, Glu-71, and Asp-143. Residues Asp-12, Glu-71, and Asp-143 each contribute to the Mg(2+) site.

The protein belongs to the RuvC family. In terms of assembly, homodimer which binds Holliday junction (HJ) DNA. The HJ becomes 2-fold symmetrical on binding to RuvC with unstacked arms; it has a different conformation from HJ DNA in complex with RuvA. In the full resolvosome a probable DNA-RuvA(4)-RuvB(12)-RuvC(2) complex forms which resolves the HJ. Mg(2+) serves as cofactor.

Its subcellular location is the cytoplasm. The enzyme catalyses Endonucleolytic cleavage at a junction such as a reciprocal single-stranded crossover between two homologous DNA duplexes (Holliday junction).. The RuvA-RuvB-RuvC complex processes Holliday junction (HJ) DNA during genetic recombination and DNA repair. Endonuclease that resolves HJ intermediates. Cleaves cruciform DNA by making single-stranded nicks across the HJ at symmetrical positions within the homologous arms, yielding a 5'-phosphate and a 3'-hydroxyl group; requires a central core of homology in the junction. The consensus cleavage sequence is 5'-(A/T)TT(C/G)-3'. Cleavage occurs on the 3'-side of the TT dinucleotide at the point of strand exchange. HJ branch migration catalyzed by RuvA-RuvB allows RuvC to scan DNA until it finds its consensus sequence, where it cleaves and resolves the cruciform DNA. The sequence is that of Crossover junction endodeoxyribonuclease RuvC from Oleidesulfovibrio alaskensis (strain ATCC BAA-1058 / DSM 17464 / G20) (Desulfovibrio alaskensis).